The following is a 188-amino-acid chain: UPF0301 protein MCA2336 2 (188 aa).

The protein belongs to the UPF0301 (AlgH) family.

This is UPF0301 protein MCA2336 2 from Methylococcus capsulatus (strain ATCC 33009 / NCIMB 11132 / Bath).